The sequence spans 1088 residues: Neural cell adhesion molecule 1-A (1088 aa).

The first 19 residues, 1–19, serve as a signal peptide directing secretion; the sequence is MLHIKDLIWTLYFIGTAVA. Ig-like C2-type domains are found at residues 20-108, 113-202, 209-294, 303-397, and 400-484; these read LEVN…GTVN, QKLT…KDIQ, PTIQ…AEAT, PKIT…FEVQ, and PKIR…HEFS. The Extracellular segment spans residues 20–705; the sequence is LEVNIVPDQG…TASAGTGLGT (686 aa). Cystine bridges form between cysteine 41/cysteine 93 and cysteine 136/cysteine 186. N-linked (GlcNAc...) asparagine glycosylation is present at asparagine 82. Residues 149–153 and 158–162 each bind heparin; these read RHKGK and KKDVR. A glycan (N-linked (GlcNAc...) asparagine) is linked at asparagine 219. Cysteine 232 and cysteine 282 are disulfide-bonded. Residues asparagine 310, asparagine 341, asparagine 417, asparagine 443, and asparagine 472 are each glycosylated (N-linked (GlcNAc...) asparagine). Cysteine 323 and cysteine 379 form a disulfide bridge. An intrachain disulfide couples cysteine 420 to cysteine 473. Fibronectin type-III domains lie at 493–592 and 594–690; these read TPSS…TQPV and EPSA…TAKP. The helical transmembrane segment at 706 to 723 threads the bilayer; sequence GAIVGILIVIFVLLLVVV. At 724–1088 the chain is on the cytoplasmic side; it reads DVTCFFLNKC…TQTNANESKA (365 aa). Basic and acidic residues predominate over residues 758-784; it reads EGKAAFSKDESKEPIVEVRTEEERTPN. Disordered regions lie at residues 758–802, 829–1000, and 1024–1088; these read EGKA…LTEP, FATA…DGGT, and VASG…ESKA. Low complexity-rich tracts occupy residues 835-847, 854-875, and 913-936; these read SPTS…TSST, APDS…APTT, and PSAA…VPPN. Positions 965 to 974 are enriched in polar residues; it reads QPSTVKNPTE. Over residues 1046 to 1064 the composition is skewed to basic and acidic residues; the sequence is AKTEKTQVEEKSKPEEIDV. A compositionally biased stretch (polar residues) spans 1076 to 1088; it reads NEATQTNANESKA.

In terms of processing, polysialylated by ST8SIA2 and ST8SIA4. Polysialylation modulates cell interactions by confering both attractive and repulsive properties that are highly regulated by ST8SIA2 and ST8SIA4. Polysialylation is formed on a-2,3-linked sialic acid of core glycans. Expressed in neuron and in presumptive neural tissue.

The protein localises to the cell membrane. Its function is as follows. This protein is a cell adhesion molecule involved in neuron-neuron adhesion, neurite fasciculation, outgrowth of neurites, etc. The sequence is that of Neural cell adhesion molecule 1-A from Xenopus laevis (African clawed frog).